The sequence spans 377 residues: MSKRDYYEVLGVGRDASEREIKKAYKRLAMKFHPDRNPGDKAAEASFKEVKEAYEILTDANKKAAYDQFGHAGVDPNRGGGGGYGGAGDFGDIFGDVFGDIFGGGRRGGQRQAARGSDLRYNLELSLEEAVKGLTKELRIPTLASCDVCDGSGAKKGTSATTCGTCHGQGQVQMRQGFFTVQQACPTCHGRGKIIKDPCTKCHGDGRVEKTKTLSVKIPAGVDTGDRIRLAGEGEAGEFGAPPGDLYVQVTVREHAIFVRDGNNLYCEVPISFSKAALGGEIEVPTLDGKVSLKIPAETQTGRMFRLRGKGVKSVRSHAVGDLLCKVVMETPVNLNERQKELLREFEATLTGESKKHSPKAEGFFDGVKKFFQDLNS.

Residues 5 to 70 form the J domain; it reads DYYEVLGVGR…NKKAAYDQFG (66 aa). The CR-type zinc-finger motif lies at 133 to 211; that stretch reads GLTKELRIPT…CHGDGRVEKT (79 aa). Residues C146, C149, C163, C166, C185, C188, C199, and C202 each contribute to the Zn(2+) site. CXXCXGXG motif repeat units lie at residues 146–153, 163–170, 185–192, and 199–206; these read CDVCDGSG, CGTCHGQG, CPTCHGRG, and CTKCHGDG.

Belongs to the DnaJ family. In terms of assembly, homodimer. It depends on Zn(2+) as a cofactor.

The protein resides in the cytoplasm. Its function is as follows. Participates actively in the response to hyperosmotic and heat shock by preventing the aggregation of stress-denatured proteins and by disaggregating proteins, also in an autonomous, DnaK-independent fashion. Unfolded proteins bind initially to DnaJ; upon interaction with the DnaJ-bound protein, DnaK hydrolyzes its bound ATP, resulting in the formation of a stable complex. GrpE releases ADP from DnaK; ATP binding to DnaK triggers the release of the substrate protein, thus completing the reaction cycle. Several rounds of ATP-dependent interactions between DnaJ, DnaK and GrpE are required for fully efficient folding. Also involved, together with DnaK and GrpE, in the DNA replication of plasmids through activation of initiation proteins. In Shewanella sp. (strain MR-4), this protein is Chaperone protein DnaJ.